The sequence spans 329 residues: GMP reductase (329 aa).

Catalysis depends on Cys-178, which acts as the Thioimidate intermediate. An NADP(+)-binding site is contributed by 207–230 (IIADGGIRNNGDIAKSIRFGATMC).

Belongs to the IMPDH/GMPR family. GuaC type 2 subfamily.

It carries out the reaction IMP + NH4(+) + NADP(+) = GMP + NADPH + 2 H(+). In terms of biological role, catalyzes the irreversible NADPH-dependent deamination of GMP to IMP. It functions in the conversion of nucleobase, nucleoside and nucleotide derivatives of G to A nucleotides, and in maintaining the intracellular balance of A and G nucleotides. The sequence is that of GMP reductase from Lacticaseibacillus paracasei (strain ATCC 334 / BCRC 17002 / CCUG 31169 / CIP 107868 / KCTC 3260 / NRRL B-441) (Lactobacillus paracasei).